The sequence spans 100 residues: A-type ATP synthase subunit F (100 aa).

It belongs to the V-ATPase F subunit family. In terms of assembly, has multiple subunits with at least A(3), B(3), C, D, E, F, H, I and proteolipid K(x).

The protein resides in the cell membrane. In terms of biological role, component of the A-type ATP synthase that produces ATP from ADP in the presence of a proton gradient across the membrane. The polypeptide is A-type ATP synthase subunit F (Methanospirillum hungatei JF-1 (strain ATCC 27890 / DSM 864 / NBRC 100397 / JF-1)).